Consider the following 185-residue polypeptide: NEDD8-conjugating enzyme UBE2F (185 aa).

Positions 1–29 (MLTLASKLKREEGVRAGRTPAGSNDAAHR) are interaction with uba3. A UBC core domain is found at 32-185 (IRDRLLIKEV…VQDFIKNYAR (154 aa)). The active-site Glycyl thioester intermediate is C116.

This sequence belongs to the ubiquitin-conjugating enzyme family. UBE2F subfamily.

The enzyme catalyses [E1 NEDD8-activating enzyme]-S-[NEDD8 protein]-yl-L-cysteine + [E2 NEDD8-conjugating enzyme]-L-cysteine = [E1 NEDD8-activating enzyme]-L-cysteine + [E2 NEDD8-conjugating enzyme]-S-[NEDD8-protein]-yl-L-cysteine.. It participates in protein modification; protein neddylation. Accepts the ubiquitin-like protein NEDD8 from the UBA3-NAE1 E1 complex and catalyzes its covalent attachment to other proteins. Together with the E3 ubiquitin ligase rnf7/rbx2, specifically neddylates cullin-5 (cul5). Does not neddylate cul1, cul2, cul3, cul4a or cul4b. This is NEDD8-conjugating enzyme UBE2F (ube2f) from Danio rerio (Zebrafish).